A 143-amino-acid chain; its full sequence is FAD synthase (143 aa).

Residues 13–14 (TF), 18–21 (HPGH), and aspartate 96 each bind ATP.

It belongs to the archaeal FAD synthase family. As to quaternary structure, homodimer. A divalent metal cation is required as a cofactor.

It carries out the reaction FMN + ATP + H(+) = FAD + diphosphate. It functions in the pathway cofactor biosynthesis; FAD biosynthesis; FAD from FMN: step 1/1. Its function is as follows. Catalyzes the transfer of the AMP portion of ATP to flavin mononucleotide (FMN) to produce flavin adenine dinucleotide (FAD) coenzyme. The chain is FAD synthase from Methanothrix thermoacetophila (strain DSM 6194 / JCM 14653 / NBRC 101360 / PT) (Methanosaeta thermophila).